Here is a 954-residue protein sequence, read N- to C-terminus: Valine--tRNA ligase (954 aa).

Residues 48–58 (PNVTGSLHMGH) carry the 'HIGH' region motif. A 'KMSKS' region motif is present at residues 560–564 (KMSKS). Lys-563 lines the ATP pocket. A coiled-coil region spans residues 883–954 (AGFINKEAEL…QTQYQAIENL (72 aa)).

The protein belongs to the class-I aminoacyl-tRNA synthetase family. ValS type 1 subfamily. In terms of assembly, monomer.

It localises to the cytoplasm. The enzyme catalyses tRNA(Val) + L-valine + ATP = L-valyl-tRNA(Val) + AMP + diphosphate. In terms of biological role, catalyzes the attachment of valine to tRNA(Val). As ValRS can inadvertently accommodate and process structurally similar amino acids such as threonine, to avoid such errors, it has a 'posttransfer' editing activity that hydrolyzes mischarged Thr-tRNA(Val) in a tRNA-dependent manner. In Actinobacillus pleuropneumoniae serotype 5b (strain L20), this protein is Valine--tRNA ligase.